We begin with the raw amino-acid sequence, 472 residues long: Flotillin-like protein 6 (472 aa).

C37 is lipidated: S-palmitoyl cysteine. The stretch at 237 to 327 forms a coiled coil; it reads ENQREAEVAQ…ELYKKQKEAE (91 aa).

This sequence belongs to the band 7/mec-2 family. Flotillin subfamily. May be palmitoylated. As to expression, very low occasional expression in roots and nodules.

It localises to the cell membrane. It is found in the membrane. The protein resides in the caveola. Functionally, may act as a scaffolding protein within caveolar membranes, functionally participating in formation of caveolae or caveolae-like vesicles. May be involved in nodule formation. The chain is Flotillin-like protein 6 (FLOT6) from Medicago truncatula (Barrel medic).